Here is a 447-residue protein sequence, read N- to C-terminus: N-succinylarginine dihydrolase (447 aa).

Residues 19–28 (AGLSFGNEAS), Asn110, and 137–138 (HR) each bind substrate. The active site involves Glu174. Arg212 serves as a coordination point for substrate. Residue His248 is part of the active site. The substrate site is built by Asp250 and Asn359. Cys365 acts as the Nucleophile in catalysis.

It belongs to the succinylarginine dihydrolase family. As to quaternary structure, homodimer.

The enzyme catalyses N(2)-succinyl-L-arginine + 2 H2O + 2 H(+) = N(2)-succinyl-L-ornithine + 2 NH4(+) + CO2. Its pathway is amino-acid degradation; L-arginine degradation via AST pathway; L-glutamate and succinate from L-arginine: step 2/5. Catalyzes the hydrolysis of N(2)-succinylarginine into N(2)-succinylornithine, ammonia and CO(2). The protein is N-succinylarginine dihydrolase of Salmonella arizonae (strain ATCC BAA-731 / CDC346-86 / RSK2980).